The following is a 199-amino-acid chain: NAD(P)H dehydrogenase (quinone) (199 aa).

The Flavodoxin-like domain maps to 4–190; sequence VLVLYYSAYG…DAARFQGAHV (187 aa). FMN is bound by residues 10-15 and 78-80; these read SAYGHI and TRY. An NAD(+)-binding site is contributed by Tyr12. Trp98 is a substrate binding site. Residues 113–119 and His134 each bind FMN; that span reads SSATQHG.

The protein belongs to the WrbA family. FMN serves as cofactor.

It carries out the reaction a quinone + NADH + H(+) = a quinol + NAD(+). The enzyme catalyses a quinone + NADPH + H(+) = a quinol + NADP(+). In Sinorhizobium fredii (strain NBRC 101917 / NGR234), this protein is NAD(P)H dehydrogenase (quinone).